The chain runs to 279 residues: Proteasome subunit beta 2 (279 aa).

The propeptide at 1–53 (MAAAFDPSGRFPDLFTSVGTSSFSAFLSKAAPELLPGRRPLPPGMATGLTPHA) is removed in mature form; by autocatalysis. Thr-54 acts as the Nucleophile in catalysis.

It belongs to the peptidase T1B family. The 20S proteasome core is composed of 14 alpha and 14 beta subunits that assemble into four stacked heptameric rings, resulting in a barrel-shaped structure. The two inner rings, each composed of seven catalytic beta subunits, are sandwiched by two outer rings, each composed of seven alpha subunits. The catalytic chamber with the active sites is on the inside of the barrel. Has a gated structure, the ends of the cylinder being occluded by the N-termini of the alpha-subunits. Is capped by the proteasome-associated ATPase, ARC.

The protein resides in the cytoplasm. The catalysed reaction is Cleavage of peptide bonds with very broad specificity.. It functions in the pathway protein degradation; proteasomal Pup-dependent pathway. Its activity is regulated as follows. The formation of the proteasomal ATPase ARC-20S proteasome complex, likely via the docking of the C-termini of ARC into the intersubunit pockets in the alpha-rings, may trigger opening of the gate for substrate entry. Interconversion between the open-gate and close-gate conformations leads to a dynamic regulation of the 20S proteasome proteolysis activity. Component of the proteasome core, a large protease complex with broad specificity involved in protein degradation. This Salinispora tropica (strain ATCC BAA-916 / DSM 44818 / JCM 13857 / NBRC 105044 / CNB-440) protein is Proteasome subunit beta 2.